The sequence spans 78 residues: Hainantoxin-XX.2 (78 aa).

The first 23 residues, 1 to 23, serve as a signal peptide directing secretion; it reads MKSATLLALSYLLIALYFLICEA. A propeptide spanning residues 24–47 is cleaved from the precursor; that stretch reads EHSRYEEHEILEENMGDVVNLEQR. 3 disulfide bridges follow: Cys-49–Cys-62, Cys-56–Cys-66, and Cys-61–Cys-77.

Belongs to the hainantoxin family. 20 subfamily. As to expression, expressed by the venom gland.

It is found in the secreted. In terms of biological role, moderately inhibits Kv1.1/KCNA1 and Kv1.2/KCNA2 and weakly inhibits Kv1.3/KCNA3, and Kv2.1/KCNB1 voltage-gated potassium channels. The sequence is that of Hainantoxin-XX.2 from Cyriopagopus hainanus (Chinese bird spider).